Here is a 267-residue protein sequence, read N- to C-terminus: Hydroxyethylthiazole kinase (267 aa).

Substrate is bound at residue Met-44. Residues Lys-120 and Thr-166 each contribute to the ATP site. Gly-193 provides a ligand contact to substrate.

Belongs to the Thz kinase family. Mg(2+) serves as cofactor.

The enzyme catalyses 5-(2-hydroxyethyl)-4-methylthiazole + ATP = 4-methyl-5-(2-phosphooxyethyl)-thiazole + ADP + H(+). It functions in the pathway cofactor biosynthesis; thiamine diphosphate biosynthesis; 4-methyl-5-(2-phosphoethyl)-thiazole from 5-(2-hydroxyethyl)-4-methylthiazole: step 1/1. Catalyzes the phosphorylation of the hydroxyl group of 4-methyl-5-beta-hydroxyethylthiazole (THZ). This chain is Hydroxyethylthiazole kinase, found in Desulfitobacterium hafniense (strain DSM 10664 / DCB-2).